Reading from the N-terminus, the 355-residue chain is NADH dehydrogenase [ubiquinone] 1 alpha subcomplex subunit 10, mitochondrial (355 aa).

The transit peptide at 1-35 (MALRLLRLVPASAPARGLAAGAQRVGRIHTSVHCK) directs the protein to the mitochondrion. K122 is subject to N6-acetyllysine; alternate. K122 carries the N6-succinyllysine; alternate modification. At S250 the chain carries Phosphoserine; by PINK1. K285 carries the post-translational modification N6-succinyllysine.

The protein belongs to the complex I NDUFA10 subunit family. Complex I is composed of 45 different subunits. This a component of the hydrophobic protein fraction. Requires FAD as cofactor. In terms of processing, phosphorylation at Ser-250 by PINK1 is required for the binding and/or reduction of the complex I substrate ubiquinone. Post-translationally, acetylation of Lys-242 is observed in liver mitochondria from fasted mice but not from fed mice.

The protein localises to the mitochondrion matrix. Functionally, accessory subunit of the mitochondrial membrane respiratory chain NADH dehydrogenase (Complex I), that is believed not to be involved in catalysis. Complex I functions in the transfer of electrons from NADH to the respiratory chain. The immediate electron acceptor for the enzyme is believed to be ubiquinone. This is NADH dehydrogenase [ubiquinone] 1 alpha subcomplex subunit 10, mitochondrial (Ndufa10) from Mus musculus (Mouse).